The following is a 149-amino-acid chain: SsrA-binding protein (149 aa).

Belongs to the SmpB family.

It localises to the cytoplasm. In terms of biological role, required for rescue of stalled ribosomes mediated by trans-translation. Binds to transfer-messenger RNA (tmRNA), required for stable association of tmRNA with ribosomes. tmRNA and SmpB together mimic tRNA shape, replacing the anticodon stem-loop with SmpB. tmRNA is encoded by the ssrA gene; the 2 termini fold to resemble tRNA(Ala) and it encodes a 'tag peptide', a short internal open reading frame. During trans-translation Ala-aminoacylated tmRNA acts like a tRNA, entering the A-site of stalled ribosomes, displacing the stalled mRNA. The ribosome then switches to translate the ORF on the tmRNA; the nascent peptide is terminated with the 'tag peptide' encoded by the tmRNA and targeted for degradation. The ribosome is freed to recommence translation, which seems to be the essential function of trans-translation. This Thermosipho africanus (strain TCF52B) protein is SsrA-binding protein.